Consider the following 1407-residue polypeptide: DNA-directed RNA polymerase subunit beta' (1407 aa).

Cys-70, Cys-72, Cys-85, and Cys-88 together coordinate Zn(2+). Asp-460, Asp-462, and Asp-464 together coordinate Mg(2+). Positions 814, 888, 895, and 898 each coordinate Zn(2+).

It belongs to the RNA polymerase beta' chain family. The RNAP catalytic core consists of 2 alpha, 1 beta, 1 beta' and 1 omega subunit. When a sigma factor is associated with the core the holoenzyme is formed, which can initiate transcription. Requires Mg(2+) as cofactor. It depends on Zn(2+) as a cofactor.

The catalysed reaction is RNA(n) + a ribonucleoside 5'-triphosphate = RNA(n+1) + diphosphate. Functionally, DNA-dependent RNA polymerase catalyzes the transcription of DNA into RNA using the four ribonucleoside triphosphates as substrates. This chain is DNA-directed RNA polymerase subunit beta', found in Salmonella paratyphi A (strain ATCC 9150 / SARB42).